A 311-amino-acid chain; its full sequence is Aspartate carbamoyltransferase catalytic subunit (311 aa).

2 residues coordinate carbamoyl phosphate: arginine 55 and threonine 56. Position 85 (lysine 85) interacts with L-aspartate. Carbamoyl phosphate is bound by residues arginine 106, histidine 135, and glutamine 138. L-aspartate-binding residues include arginine 168 and arginine 230. Residues leucine 268 and proline 269 each coordinate carbamoyl phosphate.

It belongs to the aspartate/ornithine carbamoyltransferase superfamily. ATCase family. As to quaternary structure, heterododecamer (2C3:3R2) of six catalytic PyrB chains organized as two trimers (C3), and six regulatory PyrI chains organized as three dimers (R2).

The enzyme catalyses carbamoyl phosphate + L-aspartate = N-carbamoyl-L-aspartate + phosphate + H(+). The protein operates within pyrimidine metabolism; UMP biosynthesis via de novo pathway; (S)-dihydroorotate from bicarbonate: step 2/3. In terms of biological role, catalyzes the condensation of carbamoyl phosphate and aspartate to form carbamoyl aspartate and inorganic phosphate, the committed step in the de novo pyrimidine nucleotide biosynthesis pathway. This chain is Aspartate carbamoyltransferase catalytic subunit, found in Buchnera aphidicola subsp. Schizaphis graminum (strain Sg).